We begin with the raw amino-acid sequence, 339 residues long: tRNA-dihydrouridine(20/20a) synthase (339 aa).

FMN-binding positions include 26–28 (PML) and Gln78. The active-site Proton donor is Cys108. FMN contacts are provided by residues Lys147, His180, 220–222 (NGG), and 242–243 (GR).

Belongs to the Dus family. DusA subfamily. FMN is required as a cofactor.

It catalyses the reaction 5,6-dihydrouridine(20) in tRNA + NADP(+) = uridine(20) in tRNA + NADPH + H(+). The catalysed reaction is 5,6-dihydrouridine(20) in tRNA + NAD(+) = uridine(20) in tRNA + NADH + H(+). It carries out the reaction 5,6-dihydrouridine(20a) in tRNA + NADP(+) = uridine(20a) in tRNA + NADPH + H(+). The enzyme catalyses 5,6-dihydrouridine(20a) in tRNA + NAD(+) = uridine(20a) in tRNA + NADH + H(+). Its function is as follows. Catalyzes the synthesis of 5,6-dihydrouridine (D), a modified base found in the D-loop of most tRNAs, via the reduction of the C5-C6 double bond in target uridines. Specifically modifies U20 and U20a in tRNAs. This chain is tRNA-dihydrouridine(20/20a) synthase, found in Shigella flexneri.